We begin with the raw amino-acid sequence, 65 residues long: Large ribosomal subunit protein bL33c (65 aa).

Belongs to the bacterial ribosomal protein bL33 family.

It localises to the plastid. It is found in the chloroplast. In Zygnema circumcarinatum (Green alga), this protein is Large ribosomal subunit protein bL33c.